The chain runs to 352 residues: MKISVAVSGASGYAGGEVLRLLANHPQVQIGAITAHSNAGSRLGELQPHLYSLADRLLEENSVANLAGHDVVFLALPHGASGEIAAQLPAETLVIDAGADHRLVYAGAWQEFYHSEHAGTWPYGLPELPIAHGRRQREELRTTKRIAVPGCYPTSALLALAPGFAAGALLADDVVIVSASGTSGAGKAAKTNLLGSEVIGSMAPYGVGGVHRHTPEIEQGLSSVAGEQVTVSFTPTLAPMSRGILTTATAKVAPQLLKETSAAQLRQIWVDAYEDEEFIHVLPEGQWPATQSVLGSNHVGIQVALDERTGRVIVCSVIDNLTKGTAGAAVQSMNIALGLEENLGLKQLGVAP.

Residue Cys-151 is part of the active site.

The protein belongs to the NAGSA dehydrogenase family. Type 1 subfamily.

Its subcellular location is the cytoplasm. The catalysed reaction is N-acetyl-L-glutamate 5-semialdehyde + phosphate + NADP(+) = N-acetyl-L-glutamyl 5-phosphate + NADPH + H(+). The protein operates within amino-acid biosynthesis; L-arginine biosynthesis; N(2)-acetyl-L-ornithine from L-glutamate: step 3/4. Its function is as follows. Catalyzes the NADPH-dependent reduction of N-acetyl-5-glutamyl phosphate to yield N-acetyl-L-glutamate 5-semialdehyde. The sequence is that of N-acetyl-gamma-glutamyl-phosphate reductase from Renibacterium salmoninarum (strain ATCC 33209 / DSM 20767 / JCM 11484 / NBRC 15589 / NCIMB 2235).